The chain runs to 44 residues: Photosystem I reaction center subunit IX (44 aa).

Residues 7 to 27 (YLSVAPVVSTIWFGALAGLLI) form a helical membrane-spanning segment.

Belongs to the PsaJ family.

It is found in the plastid. The protein localises to the chloroplast thylakoid membrane. In terms of biological role, may help in the organization of the PsaE and PsaF subunits. The chain is Photosystem I reaction center subunit IX from Cucumis sativus (Cucumber).